The following is a 566-amino-acid chain: FAD-dependent monooxygenase asqG (566 aa).

A signal peptide spans 1 to 19; that stretch reads MAAFTVIIIGGSISGLTLA. FAD contacts are provided by E33, V47, R113, D313, and A326. Helical transmembrane passes span 448-468 and 482-502; these read ASST…GAVW and GYTL…ASAV.

This sequence belongs to the paxM FAD-dependent monooxygenase family. FAD is required as a cofactor.

Its subcellular location is the membrane. It catalyses the reaction [(1'E)-3'-hydroxy-3',7'-dimethylocta-1',6'-dien-1'-yl]-quinolinone B + NADPH + O2 + H(+) = [(1'E)-5'-(3',3'-dimethyloxiran-2'-yl)-3'-hydroxy-3'-methylpent-1'-en-1'-yl]-quinolinone B + NADP(+) + H2O. It functions in the pathway secondary metabolite biosynthesis. The protein operates within alkaloid biosynthesis. Its pathway is mycotoxin biosynthesis. FAD-dependent monooxygenase; part of the gene cluster that mediates the biosynthesis of the aspoquinolone mycotoxins. Within the pathway, the FAD-dependent monooxygenase asqG catalyzes the epoxidation of the terminal C7'-C8' olefin to produce the intermediate [(1'E)-5'-(3',3'-dimethyloxiran-2'-yl)-3'-hydroxy-3'-methylpent-1'-en-1'-yl]-quinolinone B. The first step of the pathway is catalyzed by the nonribosomal peptide synthetase asqK that condenses anthranilic acid and O-methyl-L-tyrosine to produce 4'-methoxycyclopeptin. 4'-methoxycyclopeptin is then converted to 4'-methoxydehydrocyclopeptin by the ketoglutarate-dependent dioxygenase asqJ. AsqJ also converts its first product 4'-methoxydehydrocyclopeptin to 4'-methoxycyclopenin. The following conversion of 4'-methoxycyclopenin into 4'-methoxyviridicatin is catalyzed by the cyclopenase asqI. 4'-methoxyviridicatin is the precursor of quinolone natural products, and is further converted to quinolinone B. The prenyltransferase asqH1 then catalyzes the canonical Friedel-Crafts alkylation of quinolinone B with dimethylallyl cation to yield dimethylallyl quinolone, which is subjected to FAD-dependent dehydrogenation by the FAD-linked oxidoreductase asqF to yield conjugated aryl diene. The delta(3') double bond then serves as the site of the second alkylation with DMAPP catalyzed by the prenyltransferase asqH2 to yield a carbenium ion intermediate, which can be attacked by H(2)O to yield a styrenyl quinolone containing a C3'-hydroxyprenyl chain. The FAD-dependent monooxygenase asqG performs epoxidation of the terminal C7'-C8' olefin. Finally, after dehydratation of the epoxide at C3 by asqC, the quinolone epoxide rearrangement protein asqO catalyzes an enzymatic 3-exo-tet cyclization to yield the cyclopropyl-THF ring system in aspoquinolone. The polypeptide is FAD-dependent monooxygenase asqG (Emericella nidulans (strain FGSC A4 / ATCC 38163 / CBS 112.46 / NRRL 194 / M139) (Aspergillus nidulans)).